The chain runs to 129 residues: MNWLDEVSWDEKGLIPVIAQEASSGDVLMFAWMNREALQKTAELGQAVYYSRSRGRLWHKGEESGHLQTVHEIRLDCDNDVVLLKVTQLGHEPGIACHTGRHSCFFHLYKDGQWVVTEPVLKDPGSIYK.

Residue Asp-76 participates in Mg(2+) binding. Zn(2+) is bound at residue Cys-77. 2 residues coordinate Mg(2+): Asp-78 and Asp-80. 2 residues coordinate Zn(2+): Cys-97 and Cys-104.

The protein belongs to the PRA-CH family. In terms of assembly, homodimer. It depends on Mg(2+) as a cofactor. Zn(2+) serves as cofactor.

Its subcellular location is the cytoplasm. The enzyme catalyses 1-(5-phospho-beta-D-ribosyl)-5'-AMP + H2O = 1-(5-phospho-beta-D-ribosyl)-5-[(5-phospho-beta-D-ribosylamino)methylideneamino]imidazole-4-carboxamide. It functions in the pathway amino-acid biosynthesis; L-histidine biosynthesis; L-histidine from 5-phospho-alpha-D-ribose 1-diphosphate: step 3/9. In terms of biological role, catalyzes the hydrolysis of the adenine ring of phosphoribosyl-AMP. This is Phosphoribosyl-AMP cyclohydrolase from Polaromonas sp. (strain JS666 / ATCC BAA-500).